A 347-amino-acid polypeptide reads, in one-letter code: Dihydroorotate dehydrogenase (quinone) (347 aa).

FMN is bound by residues 62–66 (AGLDK) and Ala86. Substrate is bound at residue Lys66. Substrate is bound at residue 111–115 (NRMGF). Positions 139 and 172 each coordinate FMN. Substrate is bound at residue Asn172. Ser175 serves as the catalytic Nucleophile. Residue Asn177 participates in substrate binding. The FMN site is built by Lys217 and Thr245. 246–247 (NT) is a substrate binding site. Residues Gly268, Gly297, and 318 to 319 (YT) contribute to the FMN site.

Belongs to the dihydroorotate dehydrogenase family. Type 2 subfamily. As to quaternary structure, monomer. FMN serves as cofactor.

The protein localises to the cell membrane. It catalyses the reaction (S)-dihydroorotate + a quinone = orotate + a quinol. It participates in pyrimidine metabolism; UMP biosynthesis via de novo pathway; orotate from (S)-dihydroorotate (quinone route): step 1/1. Functionally, catalyzes the conversion of dihydroorotate to orotate with quinone as electron acceptor. This is Dihydroorotate dehydrogenase (quinone) from Coxiella burnetii (strain CbuK_Q154) (Coxiella burnetii (strain Q154)).